Reading from the N-terminus, the 329-residue chain is MISFREENIDLNLIKTISVICNDPDATDSSSDDESISGNNPRRQIKPKPPKRYVSKICVPTLIKRYENVSNSTGNKAAGNRKTSSGFKGVRRRPWGKFAAEIRNPFEKKRKWLGTFPTEEEAAEAYQKSKREFDERLGLVKQEKDLVDLTKPCGVRKPEEKEVTEKSNCKKVNKRIVTDQKPFGCGYNADHEEEGVISKMLEDPLMTSSIADIFGDSAVEANDIWVDYNSVEFISIVDDFKFDFVENDRVGKEKTFGFKIGDHTKVNQHAKIVSTNGDLFVDDLLDFDPLIDDFKLEDFPMDDLGLLGDPEDDDFSWFNGTTDWIDKFL.

2 disordered regions span residues 25 to 51 and 71 to 90; these read DATD…KPPK and NSTG…FKGV. Positions 71–86 are enriched in polar residues; that stretch reads NSTGNKAAGNRKTSSG. The AP2/ERF DNA-binding region spans 86 to 143; sequence GFKGVRRRPWGKFAAEIRNPFEKKRKWLGTFPTEEEAAEAYQKSKREFDERLGLVKQE.

It belongs to the AP2/ERF transcription factor family. ERF subfamily.

It is found in the nucleus. Its function is as follows. Probably acts as a transcriptional activator. Binds to the GCC-box pathogenesis-related promoter element. May be involved in the regulation of gene expression by stress factors and by components of stress signal transduction pathways. The chain is Ethylene-responsive transcription factor ERF117 (ERF117) from Arabidopsis thaliana (Mouse-ear cress).